A 613-amino-acid chain; its full sequence is 4-hydroxy-3-methylbut-2-en-1-yl diphosphate synthase (flavodoxin) (613 aa).

Positions 514, 517, 548, and 555 each coordinate [4Fe-4S] cluster.

Belongs to the IspG family. It depends on [4Fe-4S] cluster as a cofactor.

The enzyme catalyses (2E)-4-hydroxy-3-methylbut-2-enyl diphosphate + oxidized [flavodoxin] + H2O + 2 H(+) = 2-C-methyl-D-erythritol 2,4-cyclic diphosphate + reduced [flavodoxin]. Its pathway is isoprenoid biosynthesis; isopentenyl diphosphate biosynthesis via DXP pathway; isopentenyl diphosphate from 1-deoxy-D-xylulose 5-phosphate: step 5/6. Converts 2C-methyl-D-erythritol 2,4-cyclodiphosphate (ME-2,4cPP) into 1-hydroxy-2-methyl-2-(E)-butenyl 4-diphosphate. The protein is 4-hydroxy-3-methylbut-2-en-1-yl diphosphate synthase (flavodoxin) of Chlamydia pneumoniae (Chlamydophila pneumoniae).